The sequence spans 78 residues: MKADIHPTYHETTVNCTCGSTFTTRSTKENGVVNAEVCSQCHPFYTGKQKILDVGGRVEKFERRFGRRRPGEKVGGAK.

Zn(2+) contacts are provided by Cys-16, Cys-18, Cys-38, and Cys-41.

It belongs to the bacterial ribosomal protein bL31 family. Type A subfamily. As to quaternary structure, part of the 50S ribosomal subunit. The cofactor is Zn(2+).

Binds the 23S rRNA. The chain is Large ribosomal subunit protein bL31 from Frankia alni (strain DSM 45986 / CECT 9034 / ACN14a).